A 370-amino-acid polypeptide reads, in one-letter code: DNA replication and repair protein RecF (370 aa).

30-37 (GENAQGKT) provides a ligand contact to ATP.

It belongs to the RecF family.

It is found in the cytoplasm. The RecF protein is involved in DNA metabolism; it is required for DNA replication and normal SOS inducibility. RecF binds preferentially to single-stranded, linear DNA. It also seems to bind ATP. This chain is DNA replication and repair protein RecF, found in Listeria innocua serovar 6a (strain ATCC BAA-680 / CLIP 11262).